We begin with the raw amino-acid sequence, 685 residues long: Protein arginine N-methyltransferase 7 (685 aa).

SAM-dependent MTase PRMT-type domains are found at residues 14 to 355 (QATW…YSLW) and 364 to 685 (AESI…LKSI).

It belongs to the class I-like SAM-binding methyltransferase superfamily. Protein arginine N-methyltransferase family. PRMT7 subfamily.

Functionally, essential arginine methyltransferase that can both catalyze the formation of omega-N monomethylarginine (MMA) and symmetrical dimethylarginine (sDMA). Specifically mediates the symmetrical dimethylation of arginine residues in the small nuclear ribonucleoproteins SmD1 and SmD3. This is Protein arginine N-methyltransferase 7 (Art7) from Drosophila willistoni (Fruit fly).